Here is a 390-residue protein sequence, read N- to C-terminus: UDP-galactose translocator (390 aa).

The interval 1 to 24 (MAAVGVGGSTAAAGAGAVSSGALE) is disordered. The next 10 membrane-spanning stretches (helical) occupy residues 3 to 23 (AVGV…SGAL), 37 to 57 (YISL…IRYA), 65 to 85 (FFAT…CLLL), 97 to 117 (LVLF…KLAV), 140 to 160 (TFQV…VLML), 169 to 189 (WASL…QAGG), 200 to 220 (GAGL…GVYF), 238 to 258 (LGLF…GTAV), 269 to 289 (PAVW…AVVV), and 315 to 335 (LFGF…IGAV). Over residues 9 to 22 (STAAAGAGAVSSGA) the composition is skewed to low complexity. The disordered stretch occupies residues 356–390 (PCIHQQPPGQPPPPQLSSRGDLTTEPFLPKSVLVK).

The protein belongs to the nucleotide-sugar transporter family. SLC35A subfamily. As to quaternary structure, interacts with SLC35A3; the interaction is reduced in the presence of SLC35A4. Found in a complex with SLC35A3 and SLC35A4.

Its subcellular location is the golgi apparatus membrane. The enzyme catalyses UMP(out) + UDP-alpha-D-galactose(in) = UMP(in) + UDP-alpha-D-galactose(out). It carries out the reaction UDP-N-acetyl-alpha-D-galactosamine(in) + UMP(out) = UDP-N-acetyl-alpha-D-galactosamine(out) + UMP(in). It catalyses the reaction UMP(out) + UDP-alpha-D-glucose(in) = UMP(in) + UDP-alpha-D-glucose(out). The catalysed reaction is UMP(out) + UDP-N-acetyl-alpha-D-glucosamine(in) = UMP(in) + UDP-N-acetyl-alpha-D-glucosamine(out). The enzyme catalyses UDP-alpha-D-galactose(in) + AMP(out) = UDP-alpha-D-galactose(out) + AMP(in). It carries out the reaction UDP-alpha-D-galactose(in) + CMP(out) = UDP-alpha-D-galactose(out) + CMP(in). It catalyses the reaction UDP-N-acetyl-alpha-D-galactosamine(out) + UDP-alpha-D-galactose(in) = UDP-N-acetyl-alpha-D-galactosamine(in) + UDP-alpha-D-galactose(out). The catalysed reaction is UDP-N-acetyl-alpha-D-glucosamine(out) + UDP-alpha-D-galactose(in) = UDP-N-acetyl-alpha-D-glucosamine(in) + UDP-alpha-D-galactose(out). The enzyme catalyses UDP-alpha-D-galactose(in) + UDP-alpha-D-glucose(out) = UDP-alpha-D-galactose(out) + UDP-alpha-D-glucose(in). It carries out the reaction UMP(out) + CMP(in) = UMP(in) + CMP(out). It catalyses the reaction UMP(out) + AMP(in) = UMP(in) + AMP(out). Transports uridine diphosphate galactose (UDP-galactose) from the cytosol into the Golgi apparatus. It functions as an antiporter that exchanges UDP-galactose for UMP. It is also able to exchange UDP-galactose for AMP and CMP, and to transport UDP-N-acetylgalactosamine (UDP-GalNAc) and other nucleotide sugars. As a provider of UDP-galactose to galactosyltransferases present in the Golgi apparatus, it is necessary for globotriaosylceramide/globoside (Gb3Cer) synthesis from lactosylceramide. The chain is UDP-galactose translocator from Mus musculus (Mouse).